An 855-amino-acid chain; its full sequence is MSQPVFPTASGIFLPDLHHDEVSAPQLVMLANVVVSAEASASEYSTEGKQMMELQTVACSSYSDSEEDDDAVVRYSMDTSEDLYTQQASHIQPEPVLEEIEIVRVGRPPNQTESTENAASAEQKRTTLAILESSRKKKKPFFCKPCQYQGENEQEFIVHIRTHGTKKMLVVNGGDSDEDLSADAGPQTSVPNAESAESNSKGVIRCERCGYNTNRFDHYMAHLKHHTKEGEDQRVFKCTICAYTTISQYHWKKHLRNHFPSKLFTCSQCSYFSDRKNNYIQHIRTHAGERPFQCIYCEYSSSQKTHLTRHMRTHSGERPFKCDNCSYLAANQHEVTRHARQVHNGPKPLSCPYCQYKTADRSNFKKHVELHVNPRQFLCPVCKYAASKKCNLQYHIKSRHPGCKDISMDVSKVRLRVKRSDGDDASPNKLTAEQAKIMEELEDAGPINLSIKKPSKLNAVVETEKSSKKNMDGKANQPQPNEKKSSSKNDPKEKTAKKLKGKTAVKDTEETQTEDTRVNNKKETKKAVKSAEKALKSRQKKEKPVKDSSVQQQSDDCEQTQHTPQQNETQENRPEKENRSLTEIANAKDCGKVQTKKPCKKQTKTLKVCGETQNVEEEEIMRQKAGKRKAENPAEPKQRIKRTKKKKDSGKPTTSEANQTNPEVMESESSEANNASKPDDSIDESQNPPVAESRPDVEPPTVSDCPIEKAPAVEDVQRPLEAEISTAAPDAPEVDSGNEMPSPTDSDGAPGFTPTLPLQHKPTDAEDDEGIHSNDGGSDISDSASEGSYDSGLMAGAEKLPETPTEERDASAARLLSHTCIFCDRSFALEMDYRKHLNRHLVNVYYLEGAAQGGK.

The C2H2-type 1 zinc finger occupies 141–163 (FFCKPCQYQGENEQEFIVHIRTH). Residues 172–199 (NGGDSDEDLSADAGPQTSVPNAESAESN) form a disordered region. A compositionally biased stretch (polar residues) spans 186–199 (PQTSVPNAESAESN). 7 consecutive C2H2-type zinc fingers follow at residues 204 to 226 (IRCERCGYNTNRFDHYMAHLKHH), 236 to 258 (FKCTICAYTTISQYHWKKHLRNH), 264 to 286 (FTCSQCSYFSDRKNNYIQHIRTH), 292 to 314 (FQCIYCEYSSSQKTHLTRHMRTH), 320 to 343 (FKCDNCSYLAANQHEVTRHARQVH), 349 to 371 (LSCPYCQYKTADRSNFKKHVELH), and 377 to 400 (FLCPVCKYAASKKCNLQYHIKSRH). Residues 458-811 (NAVVETEKSS…ETPTEERDAS (354 aa)) form a disordered region. 3 stretches are compositionally biased toward basic and acidic residues: residues 462 to 472 (ETEKSSKKNMD), 481 to 496 (NEKKSSSKNDPKEKTA), and 504 to 535 (AVKDTEETQTEDTRVNNKKETKKAVKSAEKAL). Residues 548–569 (SSVQQQSDDCEQTQHTPQQNET) are compositionally biased toward polar residues. Residues 570–580 (QENRPEKENRS) show a composition bias toward basic and acidic residues. Basic residues predominate over residues 594–604 (QTKKPCKKQTK). Basic and acidic residues predominate over residues 628–638 (RKAENPAEPKQ). The span at 639–648 (RIKRTKKKKD) shows a compositional bias: basic residues. Polar residues predominate over residues 652 to 662 (PTTSEANQTNP). Basic and acidic residues-rich tracts occupy residues 711 to 721 (PAVEDVQRPLE) and 799 to 811 (KLPETPTEERDAS). Residues 818 to 840 (HTCIFCDRSFALEMDYRKHLNRH) form a C2H2-type 9 zinc finger.

The protein resides in the nucleus. It localises to the cytoplasm. Its function is as follows. Transcriptional repressor which binds neuron-restrictive silencer element (NRSE) and represses neuronal gene transcription in non-neuronal cells. In Danio rerio (Zebrafish), this protein is RE1-silencing transcription factor (rest).